The following is a 1126-amino-acid chain: DNA-directed RNA polymerase subunit Rpo2 (1126 aa).

Zn(2+)-binding residues include cysteine 1060, cysteine 1063, cysteine 1078, and histidine 1081.

This sequence belongs to the RNA polymerase beta chain family. As to quaternary structure, part of the 13-subunit RNA polymerase complex. Interacts with TFS4. (Microbial infection) Binds viral protein RIP which blocks global transcription. Zn(2+) serves as cofactor.

The protein resides in the cytoplasm. It carries out the reaction RNA(n) + a ribonucleoside 5'-triphosphate = RNA(n+1) + diphosphate. Its function is as follows. DNA-dependent RNA polymerase (RNAP) catalyzes the transcription of DNA into RNA using the four ribonucleoside triphosphates as substrates. This subunit is involved in DNA promoter recognition. The chain is DNA-directed RNA polymerase subunit Rpo2 from Sulfolobus acidocaldarius (strain ATCC 33909 / DSM 639 / JCM 8929 / NBRC 15157 / NCIMB 11770).